Consider the following 273-residue polypeptide: Orotidine 5'-phosphate decarboxylase (273 aa).

K95 functions as the Proton donor in the catalytic mechanism.

Belongs to the OMP decarboxylase family. Type 2 subfamily.

It catalyses the reaction orotidine 5'-phosphate + H(+) = UMP + CO2. It functions in the pathway pyrimidine metabolism; UMP biosynthesis via de novo pathway; UMP from orotate: step 2/2. This is Orotidine 5'-phosphate decarboxylase from Bordetella bronchiseptica (strain ATCC BAA-588 / NCTC 13252 / RB50) (Alcaligenes bronchisepticus).